Consider the following 325-residue polypeptide: Brain mitochondrial carrier protein 1 (325 aa).

Transmembrane regions (helical) follow at residues 38 to 54 (GLNW…SIVA), 112 to 128 (LRQA…YQSL), 141 to 161 (LLIN…IANP), 199 to 215 (GVVP…GVEL), 240 to 256 (VSSF…SNPV), and 298 to 315 (GFWP…IFFI). 3 Solcar repeats span residues 42 to 131 (KPFV…LKRL), 139 to 224 (ETLL…TKKH), and 233 to 323 (DTIL…LKRL).

It belongs to the mitochondrial carrier (TC 2.A.29) family. Homotetramer. As to expression, mainly expressed in brain. Some expression in testis and pituitary.

The protein localises to the mitochondrion inner membrane. It catalyses the reaction sulfite(in) + sulfate(out) = sulfite(out) + sulfate(in). The catalysed reaction is thiosulfate(in) + sulfate(out) = thiosulfate(out) + sulfate(in). The enzyme catalyses sulfate(out) + phosphate(in) = sulfate(in) + phosphate(out). It carries out the reaction oxalate(in) + sulfate(out) = oxalate(out) + sulfate(in). It catalyses the reaction malonate(in) + sulfate(out) = malonate(out) + sulfate(in). The catalysed reaction is maleate(in) + sulfate(out) = maleate(out) + sulfate(in). The enzyme catalyses (S)-malate(in) + sulfate(out) = (S)-malate(out) + sulfate(in). It carries out the reaction (3S)-citramalate(in) + sulfate(out) = (3S)-citramalate(out) + sulfate(in). It catalyses the reaction (3R)-citramalate(in) + sulfate(out) = (3R)-citramalate(out) + sulfate(in). The catalysed reaction is sulfate(out) + succinate(in) = sulfate(in) + succinate(out). The enzyme catalyses (S,S)-tartrate(in) + sulfate(out) = (S,S)-tartrate(out) + sulfate(in). It carries out the reaction (2R,3R)-tartrate(in) + sulfate(out) = (2R,3R)-tartrate(out) + sulfate(in). It catalyses the reaction D-aspartate(in) + sulfate(out) = D-aspartate(out) + sulfate(in). The catalysed reaction is L-aspartate(in) + sulfate(out) = L-aspartate(out) + sulfate(in). The enzyme catalyses sulfate(in) = sulfate(out). It carries out the reaction phosphate(in) = phosphate(out). It catalyses the reaction (S)-malate(out) = (S)-malate(in). The catalysed reaction is citrate(in) = citrate(out). The enzyme catalyses L-aspartate(out) = L-aspartate(in). It carries out the reaction L-glutamate(out) = L-glutamate(in). It catalyses the reaction H(+)(in) = H(+)(out). The catalysed reaction is chloride(in) = chloride(out). With respect to regulation, increased activity at pH lower than 8.0. sulfate/sulfate exchange activity is inhibited strongly by pyridoxal 5'-phosphate, bathophenanthroline and the organic mercurials mersalyl, p-chloromercuribenzoate and HgCl2. Proton conductance is activated by cardiolipin and long-chain free fatty acids and inhibited by purine nucleotides ATP and ADP. Chloride ion transporter activity is inhibited by long-chain free fatty acids. In terms of biological role, transports inorganic anions (sulfate, sulfite, thiosulfate and phosphate) and, to a lesser extent, a variety of dicarboxylates (e.g. malonate, malate and citramalate) and, even more so, aspartate and glutamate and tricarboxylates. May catalyze the export of sulfite and thiosulfate (the hydrogen sulfide degradation products) from the mitochondria, thereby modulating the level of the hydrogen sulfide. Also can mediate a very low unidirectional transport of anions including sulfate, phosphate, (S)-malate, citrate, L-aspartate and L-glutamate. Maintains oxidative balance (through uncoupling activities) and ATP production (by modifying mitochondrial membrane potential). Is able to transport protons across lipid membranes. Also exhibits transmembrane chloride transport activity to a lesser extent. May modify mitochondrial respiratory efficiency and mitochondrial oxidant production. In Homo sapiens (Human), this protein is Brain mitochondrial carrier protein 1.